Here is a 312-residue protein sequence, read N- to C-terminus: Homoserine O-acetyltransferase (312 aa).

C142 acts as the Acyl-thioester intermediate in catalysis. The substrate site is built by K163 and S192. The active-site Proton acceptor is H235. E237 is an active-site residue. R249 contacts substrate.

The protein belongs to the MetA family.

The protein resides in the cytoplasm. It carries out the reaction L-homoserine + acetyl-CoA = O-acetyl-L-homoserine + CoA. Its pathway is amino-acid biosynthesis; L-methionine biosynthesis via de novo pathway; O-acetyl-L-homoserine from L-homoserine: step 1/1. Its function is as follows. Transfers an acetyl group from acetyl-CoA to L-homoserine, forming acetyl-L-homoserine. The polypeptide is Homoserine O-acetyltransferase (Ruegeria pomeroyi (strain ATCC 700808 / DSM 15171 / DSS-3) (Silicibacter pomeroyi)).